The primary structure comprises 131 residues: Small ribosomal subunit protein bS6 (131 aa).

Residues 100–131 (SPMVKAKDERRSRDYSLEDANMDAEEAGDSEE) are disordered. Basic and acidic residues predominate over residues 104 to 115 (KAKDERRSRDYS). The segment covering 119 to 131 (ANMDAEEAGDSEE) has biased composition (acidic residues).

This sequence belongs to the bacterial ribosomal protein bS6 family.

Binds together with bS18 to 16S ribosomal RNA. In Photorhabdus laumondii subsp. laumondii (strain DSM 15139 / CIP 105565 / TT01) (Photorhabdus luminescens subsp. laumondii), this protein is Small ribosomal subunit protein bS6.